We begin with the raw amino-acid sequence, 57 residues long: Large ribosomal subunit protein bL33 (57 aa).

It belongs to the bacterial ribosomal protein bL33 family.

In Shewanella halifaxensis (strain HAW-EB4), this protein is Large ribosomal subunit protein bL33.